The primary structure comprises 122 residues: Small ribosomal subunit protein uS13 (122 aa).

A disordered region spans residues 99 to 122 (RGQRTHTNARTRKGPAKAIAGKKK).

This sequence belongs to the universal ribosomal protein uS13 family. Part of the 30S ribosomal subunit. Forms a loose heterodimer with protein S19. Forms two bridges to the 50S subunit in the 70S ribosome.

Functionally, located at the top of the head of the 30S subunit, it contacts several helices of the 16S rRNA. In the 70S ribosome it contacts the 23S rRNA (bridge B1a) and protein L5 of the 50S subunit (bridge B1b), connecting the 2 subunits; these bridges are implicated in subunit movement. Contacts the tRNAs in the A and P-sites. This is Small ribosomal subunit protein uS13 from Rhodopseudomonas palustris (strain BisB5).